A 475-amino-acid polypeptide reads, in one-letter code: D(1B) dopamine receptor (475 aa).

Over 1-38 (MLPPGRNRTAQPARLGLQRQLAQVDAPAGSATPLGPAQ) the chain is Extracellular. The N-linked (GlcNAc...) asparagine glycan is linked to N7. The chain crosses the membrane as a helical span at residues 39 to 64 (VVTAGLLTLLIVWTLLGNVLVCAAIV). The Cytoplasmic segment spans residues 65–75 (RSRHLRAKMTN). The chain crosses the membrane as a helical span at residues 76–102 (IFIVSLAVSDLFVALLVMPWKAVAEVA). Residues 103–111 (GYWPFGTFC) lie on the Extracellular side of the membrane. C111 and C211 form a disulfide bridge. A helical transmembrane segment spans residues 112–134 (DIWVAFDIMCSTASILNLCIISV). At 135-153 (DRYWAISRPFRYERKMTQR) the chain is on the cytoplasmic side. The helical transmembrane segment at 154-179 (VALVMVGLAWTLSILISFIPVQLNWH) threads the bilayer. The Extracellular portion of the chain corresponds to 180–215 (RDKAGSQGQEGLLSNGTPWEEGWELEGRTENCDSSL). Residues 216-240 (NRTYAISSSLISFYIPVAIMIVTYT) traverse the membrane as a helical segment. The Cytoplasmic segment spans residues 241–289 (RIYRIAQVQIRRISSLERAAEHAQSCRSRGAYEPDPSLRASIKKETKVF). A helical transmembrane segment spans residues 290-317 (KTLSMIMGVFVCCWLPFFILNCMVPFCS). Topologically, residues 318 to 335 (SGDAEGPKTGFPCVSETT) are extracellular. A helical transmembrane segment spans residues 336–357 (FDIFVWFGWANSSLNPIIYAFN). Over 358–475 (ADFRKVFAQL…LTPNCFDKTA (118 aa)) the chain is Cytoplasmic. Residue C370 is the site of S-palmitoyl cysteine attachment. A disordered region spans residues 415-443 (SGDREVGEEEEEGPFDHMSQISPTTPDGD).

This sequence belongs to the G-protein coupled receptor 1 family. As to expression, brain, in the lateral mammillary nuclei, the anterior pretectal nuclei, and several layers of the hippocampus.

It localises to the cell membrane. Its function is as follows. Dopamine receptor whose activity is mediated by G proteins which activate adenylyl cyclase. In Rattus norvegicus (Rat), this protein is D(1B) dopamine receptor (Drd5).